The sequence spans 304 residues: Secreted mono- and diacylglycerol lipase MDL2 (304 aa).

Residues 1–19 form the signal peptide; sequence MILGRTISLFLGCSALVSG. The cysteines at positions 55 and 297 are disulfide-linked. 2 N-linked (GlcNAc...) asparagine glycosylation sites follow: Asn102 and Asn161. Ser171 acts as the Nucleophile in catalysis. Asp228 is an active-site residue. N-linked (GlcNAc...) asparagine glycosylation is present at Asn253. The active site involves His281.

It belongs to the AB hydrolase superfamily. Lipase family. Class 3 subfamily.

The protein resides in the secreted. Its subcellular location is the cell wall. The catalysed reaction is a monoacylglycerol + H2O = glycerol + a fatty acid + H(+). The enzyme catalyses a diacylglycerol + H2O = a monoacylglycerol + a fatty acid + H(+). Its function is as follows. Secreted lipase involved in Dandruff and seborrheic dermatitis (D/SD) probably via lipase-mediated breakdown of sebaceous lipids and release of irritating free fatty acids. Shows activity against monoglyceride and diglyceride substrates, but not triglyceride substrates and does not exhibit regio-selective production of diacylglycerols. Hydrolyzes both 1,2- and 1,3-diacylglycerols. Also hydrolyzes distearin, dilinolein and dipalmitolein. Cleaves oleic acid from 1,2 isomers of diolein on both the 1 and the 2 position of the glycerol backbone, resulting mainly in free fatty acids but no monoolein is detected. Shows activity on monoolein and liberates mostly free fatty acids, but can also perform the reverse reaction and produce diolein. This is Secreted mono- and diacylglycerol lipase MDL2 from Malassezia globosa (strain ATCC MYA-4612 / CBS 7966) (Dandruff-associated fungus).